A 364-amino-acid polypeptide reads, in one-letter code: Glycine oxidase (364 aa).

FAD contacts are provided by residues 12-13 (VI), 32-33 (ER), 40-41 (AS), 45-47 (GGI), and Val173. Residue Arg302 participates in substrate binding. FAD is bound at residue 327-333 (HYRNGLV).

This sequence belongs to the DAO family. ThiO subfamily. Monomer. FAD is required as a cofactor.

The catalysed reaction is glycine + O2 + H2O = glyoxylate + H2O2 + NH4(+). The enzyme catalyses sarcosine + O2 + H2O = methylamine + glyoxylate + H2O2. It participates in cofactor biosynthesis; thiamine diphosphate biosynthesis. Functionally, catalyzes the oxidation of glycine, leading to glyoxyl imine and hydrogen peroxide as primary products; glyoxyl imine is used for the biosynthesis of the thiazole ring of thiamine. Otherwise, glyoxyl imine is spontaneously hydrolyzed in water to produce glyoxylate and ammonia. Can also use sarcosine (N-methylglycine) as substrate. The chain is Glycine oxidase from Pseudomonas aeruginosa (strain ATCC 15692 / DSM 22644 / CIP 104116 / JCM 14847 / LMG 12228 / 1C / PRS 101 / PAO1).